The primary structure comprises 146 residues: Transcriptional regulator MraZ (146 aa).

SpoVT-AbrB domains lie at 9 to 55 and 81 to 124; these read ASAL…PRPA and AMDV…DVQR.

This sequence belongs to the MraZ family. Forms oligomers.

It localises to the cytoplasm. The protein resides in the nucleoid. This chain is Transcriptional regulator MraZ, found in Methylibium petroleiphilum (strain ATCC BAA-1232 / LMG 22953 / PM1).